The following is a 249-amino-acid chain: 5'-nucleotidase SurE (249 aa).

Asp-8, Asp-9, Ser-39, and Asn-91 together coordinate a divalent metal cation.

Belongs to the SurE nucleotidase family. It depends on a divalent metal cation as a cofactor.

It is found in the cytoplasm. The catalysed reaction is a ribonucleoside 5'-phosphate + H2O = a ribonucleoside + phosphate. Functionally, nucleotidase that shows phosphatase activity on nucleoside 5'-monophosphates. The sequence is that of 5'-nucleotidase SurE from Pseudomonas putida (strain W619).